Here is an 886-residue protein sequence, read N- to C-terminus: Phosphatidylinositol 3-kinase catalytic subunit type 3 (886 aa).

In terms of domain architecture, C2 PI3K-type spans 35 to 184 (YKAVLEDPML…LAKLTKAHRQ (150 aa)). The region spanning 283–519 (DHDLKPNAAT…PKTHEMYLNV (237 aa)) is the PIK helical domain. A disordered region spans residues 414–464 (GLEPTKKDSQGPMLESMTTSGINPETDSSQILSNPLPAVSSPAPPSKTKDG). The segment covering 429–444 (SMTTSGINPETDSSQI) has biased composition (polar residues). Positions 445-454 (LSNPLPAVSS) are enriched in low complexity. A PI3K/PI4K catalytic domain is found at 604-870 (IPEKATLFKS…LIDDSVNALF (267 aa)). A G-loop region spans residues 610–616 (LFKSALM). Residues 739–747 (GVGDRHLDN) form a catalytic loop region. Residues 758-779 (HIDFGYILGRDPKPLPPPMKLN) form an activation loop region.

It belongs to the PI3/PI4-kinase family. In terms of assembly, component of the PI3K (PI3KC3/PI3K-III/class III phosphatidylinositol 3-kinase) complex the core of which is composed of the catalytic subunit pik3c3, the regulatory subunit pik3r4 and becn1 associating with additional regulatory/auxiliary subunits to form alternative complex forms. It depends on Mn(2+) as a cofactor.

The protein localises to the midbody. It carries out the reaction a 1,2-diacyl-sn-glycero-3-phospho-(1D-myo-inositol) + ATP = a 1,2-diacyl-sn-glycero-3-phospho-(1D-myo-inositol-3-phosphate) + ADP + H(+). Catalytic subunit of the PI3K complex that mediates formation of phosphatidylinositol 3-phosphate; different complex forms are believed to play a role in multiple membrane trafficking pathways. Involved in the transport of lysosomal enzyme precursors to lysosomes. Required for transport from early to late endosomes. This chain is Phosphatidylinositol 3-kinase catalytic subunit type 3 (pik3c3), found in Xenopus laevis (African clawed frog).